The following is a 603-amino-acid chain: Elongation factor 4 (603 aa).

Positions 7-189 (SRIRNFSIIA…SIVHLVPPPE (183 aa)) constitute a tr-type G domain. GTP is bound by residues 19 to 24 (DHGKST) and 136 to 139 (NKID).

It belongs to the TRAFAC class translation factor GTPase superfamily. Classic translation factor GTPase family. LepA subfamily.

It is found in the cell inner membrane. The enzyme catalyses GTP + H2O = GDP + phosphate + H(+). Its function is as follows. Required for accurate and efficient protein synthesis under certain stress conditions. May act as a fidelity factor of the translation reaction, by catalyzing a one-codon backward translocation of tRNAs on improperly translocated ribosomes. Back-translocation proceeds from a post-translocation (POST) complex to a pre-translocation (PRE) complex, thus giving elongation factor G a second chance to translocate the tRNAs correctly. Binds to ribosomes in a GTP-dependent manner. The protein is Elongation factor 4 of Acaryochloris marina (strain MBIC 11017).